The following is a 67-amino-acid chain: Large ribosomal subunit protein uL29c (67 aa).

The protein belongs to the universal ribosomal protein uL29 family.

It is found in the plastid. It localises to the chloroplast. The sequence is that of Large ribosomal subunit protein uL29c (rpl29) from Porphyra purpurea (Red seaweed).